Reading from the N-terminus, the 58-residue chain is Cecropin-B (58 aa).

A signal peptide spans 1–21; the sequence is ILSFVFACLLALSAVSAAPEP.

The protein belongs to the cecropin family.

The protein localises to the secreted. Cecropins have lytic and antibacterial activity against several Gram-positive and Gram-negative bacteria. This is Cecropin-B (CECB) from Spodoptera litura (Asian cotton leafworm).